The chain runs to 628 residues: NUAK family SNF1-like kinase 2 (628 aa).

At Met-1 the chain carries N-acetylmethionine. The region spanning 53–303 is the Protein kinase domain; sequence YEFLETLGKG…LEDVASHWWV (251 aa). ATP-binding positions include 59 to 67 and Lys-81; that span reads LGKGTYGKV. Asp-175 serves as the catalytic Proton acceptor. Thr-208 bears the Phosphothreonine; by LKB1 mark. Residues 355-493 are disordered; sequence KQHAPGGGST…KEQKPPQASG (139 aa). Ser-435 is subject to Phosphoserine. Residues 457-469 show a composition bias toward low complexity; sequence SGYYSSPEPSESG. Phosphoserine is present on residues Ser-523, Ser-544, Ser-547, and Ser-573. The interval 531-562 is disordered; that stretch reads RPLARASRPSGAVSEDSILSSESFDQLDLPER.

Belongs to the protein kinase superfamily. CAMK Ser/Thr protein kinase family. SNF1 subfamily. The cofactor is Mg(2+). Post-translationally, phosphorylated at Thr-208 by STK11/LKB1 in complex with STE20-related adapter-alpha (STRADA) pseudo kinase and CAB39. Autophosphorylation is also possible at Thr-208.

The enzyme catalyses L-seryl-[protein] + ATP = O-phospho-L-seryl-[protein] + ADP + H(+). The catalysed reaction is L-threonyl-[protein] + ATP = O-phospho-L-threonyl-[protein] + ADP + H(+). Its activity is regulated as follows. Activated by phosphorylation on Thr-208. Stress-activated kinase involved in tolerance to glucose starvation. Induces cell-cell detachment by increasing F-actin conversion to G-actin. Expression is induced by CD95 or TNF-alpha, via NF-kappa-B. Protects cells from CD95-mediated apoptosis and is required for the increased motility and invasiveness of CD95-activated tumor cells. Phosphorylates LATS1 and LATS2. Plays a key role in neural tube closure during embryonic development through LATS2 phosphorylation and regulation of the nuclear localization of YAP1 a critical downstream regulatory target in the Hippo signaling pathway. This chain is NUAK family SNF1-like kinase 2, found in Homo sapiens (Human).